The chain runs to 52 residues: Rubredoxin (52 aa).

The residue at position 1 (M1) is an N-formylmethionine; partial. In terms of domain architecture, Rubredoxin-like spans 1–52; that stretch reads MKKYGCLVCGYVYDPAKGDPDHGIAPGTAFEDLPADWVCPLCGVSKDEFEPL. Residues C6, C9, C39, and C42 each coordinate Fe cation.

It belongs to the rubredoxin family. Requires Fe(3+) as cofactor. In terms of processing, observed in four forms, with and without iron, and with and without formylation at Met-1.

Its function is as follows. Rubredoxin is a small nonheme, iron protein lacking acid-labile sulfide. Its single Fe, chelated to 4 Cys, functions as an electron acceptor and may also stabilize the conformation of the molecule. The polypeptide is Rubredoxin (Heliobacterium mobile (Heliobacillus mobilis)).